Reading from the N-terminus, the 187-residue chain is Protein TIFY 3B (187 aa).

Positions 1–10 (MTKVKDEPRA) are enriched in basic and acidic residues. Residues 1–50 (MTKVKDEPRASVEGGCGVADGDGGAAEIGGTGSVEKSINEVRSTEIQTAE) are disordered. The segment covering 14–32 (GGCGVADGDGGAAEIGGTG) has biased composition (gly residues). One can recognise a Tify domain in the interval 51 to 86 (PTVPPNQLTIFFGGSVTVFDGLPSEKVQEILRIAAK). The Jas signature appears at 139-163 (PIARRHSLQRFLEKRRDRLVNKNPY). The short motif at 141–148 (ARRHSLQR) is the Nuclear localization signal element. The segment at 152–187 (KRRDRLVNKNPYPTSDFKKTDVPTGNVSIKEEFPTA) is disordered.

Belongs to the TIFY/JAZ family. As to quaternary structure, interacts with MYC2, AFPH2/NINJA, TIFY10A/JAZ1, TIFY10B/JAZ2, TIFY11A/JAZ5, TIFY11B/JAZ6, TIFY5A/JAZ8 and TIFY9/JAZ10. (Microbial infection) Interacts with the pathogenic Pseudomonas syringae HopZ1a protein. In terms of processing, (Microbial infection) Acetylated by Pseudomonas syringae HopZ1a. Ubiquitinated. Targeted for degradation by the SCF(COI1) E3 ubiquitin ligase-proteasome pathway during jasmonate signaling.

It is found in the nucleus. Repressor of jasmonate responses. The polypeptide is Protein TIFY 3B (Arabidopsis thaliana (Mouse-ear cress)).